The chain runs to 408 residues: LL-diaminopimelate aminotransferase (408 aa).

Substrate-binding residues include Tyr15 and Gly42. Pyridoxal 5'-phosphate is bound by residues Tyr72, 108-109, Tyr132, Asn187, Tyr218, and 246-248; these read SK and SFS. 3 residues coordinate substrate: Lys109, Tyr132, and Asn187. Residue Lys249 is modified to N6-(pyridoxal phosphate)lysine. Residues Arg257 and Asn292 each contribute to the pyridoxal 5'-phosphate site. Asn292 and Arg388 together coordinate substrate.

Belongs to the class-I pyridoxal-phosphate-dependent aminotransferase family. LL-diaminopimelate aminotransferase subfamily. As to quaternary structure, homodimer. Pyridoxal 5'-phosphate serves as cofactor.

The enzyme catalyses (2S,6S)-2,6-diaminopimelate + 2-oxoglutarate = (S)-2,3,4,5-tetrahydrodipicolinate + L-glutamate + H2O + H(+). The protein operates within amino-acid biosynthesis; L-lysine biosynthesis via DAP pathway; LL-2,6-diaminopimelate from (S)-tetrahydrodipicolinate (aminotransferase route): step 1/1. Involved in the synthesis of meso-diaminopimelate (m-DAP or DL-DAP), required for both lysine and peptidoglycan biosynthesis. Catalyzes the direct conversion of tetrahydrodipicolinate to LL-diaminopimelate. The chain is LL-diaminopimelate aminotransferase from Prochlorococcus marinus (strain MIT 9313).